The chain runs to 163 residues: Outer membrane protein assembly factor BamE (163 aa).

The signal sequence occupies residues 1–22; that stretch reads MINKKQSLTLLSAIALSVSLSA. Cysteine 23 carries the N-palmitoyl cysteine lipid modification. A lipid anchor (S-diacylglycerol cysteine) is attached at cysteine 23. The interval 122–163 is disordered; the sequence is EQSKLPMVNTTESAPQVPAQRPDEKPLVKENQTEAQVQKPIK. Over residues 142–153 the composition is skewed to basic and acidic residues; that stretch reads RPDEKPLVKENQ.

The protein belongs to the BamE family. Part of the Bam complex.

Its subcellular location is the cell outer membrane. In terms of biological role, part of the outer membrane protein assembly complex, which is involved in assembly and insertion of beta-barrel proteins into the outer membrane. The protein is Outer membrane protein assembly factor BamE of Shewanella oneidensis (strain ATCC 700550 / JCM 31522 / CIP 106686 / LMG 19005 / NCIMB 14063 / MR-1).